The following is a 235-amino-acid chain: Lipoprotein-releasing system ATP-binding protein LolD (235 aa).

One can recognise an ABC transporter domain in the interval 13 to 235; the sequence is LCCSNIIKRY…SNGMLKISTI (223 aa). Residue 49 to 56 participates in ATP binding; that stretch reads GASGSGKS.

This sequence belongs to the ABC transporter superfamily. Lipoprotein translocase (TC 3.A.1.125) family. As to quaternary structure, the complex is composed of two ATP-binding proteins (LolD) and two transmembrane proteins (LolC and LolE).

Its subcellular location is the cell inner membrane. Functionally, part of the ABC transporter complex LolCDE involved in the translocation of mature outer membrane-directed lipoproteins, from the inner membrane to the periplasmic chaperone, LolA. Responsible for the formation of the LolA-lipoprotein complex in an ATP-dependent manner. In Blochmanniella floridana, this protein is Lipoprotein-releasing system ATP-binding protein LolD.